Reading from the N-terminus, the 237-residue chain is MNGVVAALEEMPPVTRFYTGACVLLTTAVHLEFVTPFHLYFNWELIIRKYQFWRLITSFCFFGSFGFSFLFNMIFTYRYCMMLEEGSFRGRRADFVYMFLFGAVLMILSGIFVQILFLGQAFTIMLVYIWSRRNPMIQMNFFGVLTFTAPYLPWVLLLFSLLLGNNAVVDFMGIACGHIYFFLEDVFPFQEHGKRFLKTPQWLVYLFDERRPEPLPEDERPGGFEWGDEQPEQEQHD.

Over methionine 1–glycine 20 the chain is Cytoplasmic. The helical transmembrane segment at alanine 21 to phenylalanine 41 threads the bilayer. Over asparagine 42–arginine 54 the chain is Lumenal. A helical membrane pass occupies residues leucine 55–phenylalanine 75. Topologically, residues threonine 76–tyrosine 97 are cytoplasmic. A helical transmembrane segment spans residues methionine 98–leucine 118. At glycine 119–asparagine 166 the chain is on the lumenal side. A helical membrane pass occupies residues alanine 167–phenylalanine 187. At proline 188 to aspartate 237 the chain is on the cytoplasmic side. Over residues proline 212–glycine 222 the composition is skewed to basic and acidic residues. The tract at residues proline 212–aspartate 237 is disordered. A compositionally biased stretch (acidic residues) spans tryptophan 226 to aspartate 237.

This sequence belongs to the derlin family.

Its subcellular location is the endoplasmic reticulum membrane. In terms of biological role, may be required for the degradation process of some specific misfolded endoplasmic reticulum (ER) luminal proteins. Participates in the transfer of misfolded proteins from the ER to the cytosol, where they are destroyed by the proteasome in a ubiquitin-dependent manner. Its precise function remains unclear, but its ability to complement der1 mutations in C.cerevisiae, suggests a similar function in the degradation of ER misfolded proteins. The chain is Derlin-2 from Caenorhabditis elegans.